The following is a 511-amino-acid chain: Immunoglobulin-binding protein EibD (511 aa).

Positions 1-26 are cleaved as a signal peptide; sequence MSKKFTMTLLSSSLAGLLVMSGGVSA. Positions 27–417 are surface exposed passenger domain; that stretch reads QNGTYSVLQD…SKAIAANTRT (391 aa). Residues 27 to 460 lie on the Extracellular side of the membrane; it reads QNGTYSVLQD…GLFQPYSVGK (434 aa). The segment at 161-287 is head domain; it reads DAKASGEFSV…TGTESDKTYG (127 aa). The tract at residues 288–303 is neck; the sequence is TRVLGGLSDGTRNSDA. Positions 304-349 are right-handed coiled-coil (RHcc); sequence ATVGQLNRKVGGVYDDVKARITVESEKQKKYTDQKTSEVNEKVEAR. The stretch at 304–349 forms a coiled coil; that stretch reads ATVGQLNRKVGGVYDDVKARITVESEKQKKYTDQKTSEVNEKVEAR. A required to bind IgA region spans residues 329-344; sequence EKQKKYTDQKTSEVNE. The tract at residues 350–375 is saddle domain; it reads TTVGVDSDGKLTRAEGATKTIAVNDG. A coiled-coil region spans residues 376-441; that stretch reads LVALSGRTDR…INENHKEMKR (66 aa). The tract at residues 376–441 is left-handed coiled-coil (LHcc); the sequence is LVALSGRTDR…INENHKEMKR (66 aa). The required to bind IgG stretch occupies residues 384–418; sequence DRIDYAVGAIDGRVTRNTQSIEKNSKAIAANTRTL. Residues 418-460 are outer membrane translocation of the passenger domain; that stretch reads LQQHSARLDSQQRQINENHKEMKRAAAQSAALTGLFQPYSVGK. Beta stranded transmembrane passes span 461–471, 474–485, 488–497, and 501–511; these read FNATAAVGGYS, QALAVGVGYRFN, TAAKAGVAFS, and ASWNVGVNFEF. The tract at residues 461–511 is translocator domain; it reads FNATAAVGGYSDQQALAVGVGYRFNEQTAAKAGVAFSDGDASWNVGVNFEF.

Belongs to the autotransporter-2 (AT-2) (TC 1.B.40) family. Eib subfamily. Homotrimer; can probably form mixed heterotrimers in vivo. Will form mixed heterotrimers with EibA or EibC; these are correctly located in the outer membrane and bind IgG Fc, although less well than homotrimers. In denaturing gels runs as a band of about 210 kDa. Binds the Fc portion of immunoglobulins; binds more than 1 Fc per subunit, can be modeled to bind 3 Fc per trimer.

It localises to the cell surface. Its subcellular location is the cell outer membrane. Functionally, binds (in a non-immune fashion) to the Fc portion of human IgA and IgG; binding occurs on the cell surface. Confers the ability to survive exposure to human serum exposure. Binds to the Fc portion of human IgG, IgA and to whole mouse antibodies also via Fc. Upon overexpression cells acquire an extra cell surface layer that forms a zipper-like contact between cells; cells autoagglutinate and form biofilm more readily, suggesting it may play a role in defense against a host. This is Immunoglobulin-binding protein EibD from Escherichia coli.